The sequence spans 274 residues: NH(3)-dependent NAD(+) synthetase (274 aa).

ATP is bound at residue 46–53 (GISGGQDS). Aspartate 52 is a binding site for Mg(2+). Arginine 140 contributes to the deamido-NAD(+) binding site. ATP is bound at residue threonine 160. A Mg(2+)-binding site is contributed by glutamate 165. The deamido-NAD(+) site is built by lysine 173 and aspartate 180. ATP is bound by residues lysine 189 and threonine 211. 260 to 261 (HK) provides a ligand contact to deamido-NAD(+).

This sequence belongs to the NAD synthetase family. Homodimer.

It catalyses the reaction deamido-NAD(+) + NH4(+) + ATP = AMP + diphosphate + NAD(+) + H(+). The protein operates within cofactor biosynthesis; NAD(+) biosynthesis; NAD(+) from deamido-NAD(+) (ammonia route): step 1/1. Its function is as follows. Catalyzes the ATP-dependent amidation of deamido-NAD to form NAD. Uses ammonia as a nitrogen source. The chain is NH(3)-dependent NAD(+) synthetase from Streptococcus pyogenes serotype M2 (strain MGAS10270).